The sequence spans 101 residues: Putative monooxygenase Rv0793 (101 aa).

Positions 5–93 (VAVIARFMPR…LTRPVAVTVL (89 aa)) constitute an ABM domain.

In terms of assembly, homodimer.

Its function is as follows. Putative monooygenase that might be involved in antibiotic biosynthesis, or may act as reactive oxygen species scavenger that could help in evading host defenses. The sequence is that of Putative monooxygenase Rv0793 from Mycobacterium tuberculosis (strain ATCC 25618 / H37Rv).